The primary structure comprises 151 residues: 6,7-dimethyl-8-ribityllumazine synthase (151 aa).

5-amino-6-(D-ribitylamino)uracil contacts are provided by residues Phe15, 47 to 49 (TFE), and 71 to 73 (AVI). (2S)-2-hydroxy-3-oxobutyl phosphate is bound at residue 76 to 77 (ET). His79 acts as the Proton donor in catalysis. Leu104 is a binding site for 5-amino-6-(D-ribitylamino)uracil. (2S)-2-hydroxy-3-oxobutyl phosphate is bound at residue Arg119.

The protein belongs to the DMRL synthase family.

The catalysed reaction is (2S)-2-hydroxy-3-oxobutyl phosphate + 5-amino-6-(D-ribitylamino)uracil = 6,7-dimethyl-8-(1-D-ribityl)lumazine + phosphate + 2 H2O + H(+). It functions in the pathway cofactor biosynthesis; riboflavin biosynthesis; riboflavin from 2-hydroxy-3-oxobutyl phosphate and 5-amino-6-(D-ribitylamino)uracil: step 1/2. Its function is as follows. Catalyzes the formation of 6,7-dimethyl-8-ribityllumazine by condensation of 5-amino-6-(D-ribitylamino)uracil with 3,4-dihydroxy-2-butanone 4-phosphate. This is the penultimate step in the biosynthesis of riboflavin. This is 6,7-dimethyl-8-ribityllumazine synthase from Metallosphaera sedula (strain ATCC 51363 / DSM 5348 / JCM 9185 / NBRC 15509 / TH2).